A 219-amino-acid polypeptide reads, in one-letter code: Ribosome maturation factor RimP (219 aa).

The disordered stretch occupies residues 195-219; that stretch reads EGRIPGDDLGAEPEDAASTETQEKK.

The protein belongs to the RimP family.

The protein localises to the cytoplasm. In terms of biological role, required for maturation of 30S ribosomal subunits. The sequence is that of Ribosome maturation factor RimP from Brucella melitensis biotype 2 (strain ATCC 23457).